The sequence spans 1108 residues: Isoleucine--tRNA ligase (1108 aa).

Residues 53 to 63 (PFANGLPHYGH) carry the 'HIGH' region motif. Positions 654–658 (KLSKR) match the 'KMSKS' region motif. Lys-657 contributes to the ATP binding site.

The protein belongs to the class-I aminoacyl-tRNA synthetase family. IleS type 2 subfamily. Monomer. It depends on Zn(2+) as a cofactor.

It localises to the cytoplasm. It catalyses the reaction tRNA(Ile) + L-isoleucine + ATP = L-isoleucyl-tRNA(Ile) + AMP + diphosphate. Functionally, catalyzes the attachment of isoleucine to tRNA(Ile). As IleRS can inadvertently accommodate and process structurally similar amino acids such as valine, to avoid such errors it has two additional distinct tRNA(Ile)-dependent editing activities. One activity is designated as 'pretransfer' editing and involves the hydrolysis of activated Val-AMP. The other activity is designated 'posttransfer' editing and involves deacylation of mischarged Val-tRNA(Ile). The sequence is that of Isoleucine--tRNA ligase from Rickettsia bellii (strain RML369-C).